Consider the following 674-residue polypeptide: Pre-mRNA-splicing factor cwf4 (674 aa).

HAT repeat units follow at residues 50-82 (EFQGRKRKEFEDAIRRNRLAMGHWMRYGQWELD), 84-116 (KEFARARSVFERALDVDSTYIPLWLKYIECEMK), 118-150 (RNINHARNLFDRAVTQLPRVDKLWYKYVYMEEM), 152-183 (GNITGCRQVFERWLKWEPDENCWMSYIRMERR), 185-216 (HENERARGIYERFVVVHPEVTNWLRWARFEEE), 218-253 (GNAANVRQVYLAAIDALGQEFLNERFFIAFAKFEIR), 255-289 (KEYERARTIFKYAIDFMPRSKSMELYKEYTHFEKQ), 299-331 (TVLDKRRLQYEKLLKDSPYDYDTWLDLLKLEES), 333-367 (GDINTIRETYEKAIAKVPEVVEKNAWRRYVYIWLN), 377-413 (KDVDRARKVYQEALKLIPHKKFTFAKLWLMYAMFELR), 415-446 (RKIDVARKTLGRALGMCPKPKLFRGYIEFEDA), 448-480 (KQFDRCRILYEKWILYDPEACAPWLGYAALETK), 482-516 (GDSDRARALYNLAVNQPILETPELVWKAYIDFEFE), 518-549 (MEYGKARSIYQQLLRTAPHVKVWISFANFEIA), 567-608 (TAVV…MHGT), and 610-643 (DTRKHVSSLMPQVVKKRRRLEDGSFEEYLDYLFP).

The protein belongs to the crooked-neck family. In terms of assembly, belongs to the 40S cdc5-associated complex (or cwf complex), a spliceosome sub-complex reminiscent of a late-stage spliceosome composed of the U2, U5 and U6 snRNAs and at least brr2, cdc5, cwf2/prp3, cwf3/syf1, cwf4/syf3, cwf5/ecm2, spp42/cwf6, cwf7/spf27, cwf8, cwf9, cwf10, cwf11, cwf12, prp45/cwf13, cwf14, cwf15, cwf16, cwf17, cwf18, cwf19, cwf20, cwf21, cwf22, cwf23, cwf24, cwf25, cwf26, cyp7/cwf27, cwf28, cwf29/ist3, lea1, msl1, prp5/cwf1, prp10, prp12/sap130, prp17, prp22, sap61, sap62, sap114, sap145, slu7, smb1, smd1, smd3, smf1, smg1 and syf2.

It is found in the nucleus. In terms of biological role, involved in pre-mRNA splicing and cell cycle progression. Required for the spliceosome assembly and initiation of the DNA replication. The chain is Pre-mRNA-splicing factor cwf4 (cwf4) from Schizosaccharomyces pombe (strain 972 / ATCC 24843) (Fission yeast).